Reading from the N-terminus, the 279-residue chain is Oxygen-dependent coproporphyrinogen-III oxidase (279 aa).

Position 102 (S102) interacts with substrate. A divalent metal cation contacts are provided by H106 and H116. H116 functions as the Proton donor in the catalytic mechanism. Residue 118-120 (NTR) coordinates substrate. H149 and H179 together coordinate a divalent metal cation. Positions 244–279 (YVEFNLLYDRGTKFGLMTDGNVEAILMSLPPEVKFN) are important for dimerization.

The protein belongs to the aerobic coproporphyrinogen-III oxidase family. As to quaternary structure, homodimer. It depends on a divalent metal cation as a cofactor.

The protein resides in the cytoplasm. It catalyses the reaction coproporphyrinogen III + O2 + 2 H(+) = protoporphyrinogen IX + 2 CO2 + 2 H2O. Its pathway is porphyrin-containing compound metabolism; protoporphyrin-IX biosynthesis; protoporphyrinogen-IX from coproporphyrinogen-III (O2 route): step 1/1. Its function is as follows. Involved in the heme biosynthesis. Catalyzes the aerobic oxidative decarboxylation of propionate groups of rings A and B of coproporphyrinogen-III to yield the vinyl groups in protoporphyrinogen-IX. This Rickettsia akari (strain Hartford) protein is Oxygen-dependent coproporphyrinogen-III oxidase.